Reading from the N-terminus, the 432-residue chain is Cytochrome c biogenesis protein CcsB (432 aa).

Helical transmembrane passes span 14–34 (LRIA…GTAI), 72–92 (SSWF…CSWR), and 162–182 (VGPM…VWGS).

The protein belongs to the Ccs1/CcsB family. In terms of assembly, may interact with CcsA.

Its subcellular location is the cellular thylakoid membrane. Its function is as follows. Required during biogenesis of c-type cytochromes (cytochrome c6 and cytochrome f) at the step of heme attachment. The polypeptide is Cytochrome c biogenesis protein CcsB (Prochlorococcus marinus (strain MIT 9303)).